A 441-amino-acid chain; its full sequence is Probable xylan O-acetyltransferase 10 (441 aa).

Residues 1-19 (MMKPQHGGMAGHGGGRTRS) are Cytoplasmic-facing. The helical; Signal-anchor for type II membrane protein transmembrane segment at 20–40 (PFLTSYALTLAFITFVSVLYF) threads the bilayer. Over 41-441 (KDFSSTLHQP…ELLYSKLFFP (401 aa)) the chain is Lumenal. The interval 50–81 (PFLTRPPPHRRQIARPRAPSHHHGGGSSSGGG) is disordered. Basic residues predominate over residues 56 to 73 (PPHRRQIARPRAPSHHHG). 4 disulfide bridges follow: cysteine 97/cysteine 148, cysteine 119/cysteine 184, cysteine 128/cysteine 422, and cysteine 341/cysteine 418. Residue asparagine 154 is glycosylated (N-linked (GlcNAc...) asparagine). A GDS motif motif is present at residues 171 to 173 (GDS). The Nucleophile role is filled by serine 173. Asparagine 212, asparagine 343, and asparagine 381 each carry an N-linked (GlcNAc...) asparagine glycan. The active-site Proton donor is aspartate 417. The DXXH motif signature appears at 417-420 (DCTH). Histidine 420 serves as the catalytic Proton acceptor.

The protein belongs to the PC-esterase family. TBL subfamily. Expressed in roots, leaves and stems.

It is found in the golgi apparatus membrane. In terms of biological role, probable xylan acetyltransferase required for 2-O- and 3-O-monoacetylation of xylosyl residues in xylan. Possesses extremely low activity in vitro. This is Probable xylan O-acetyltransferase 10 from Oryza sativa subsp. japonica (Rice).